Consider the following 396-residue polypeptide: Tryptophan synthase beta chain (396 aa).

An N6-(pyridoxal phosphate)lysine modification is found at Lys-88.

The protein belongs to the TrpB family. Tetramer of two alpha and two beta chains. Pyridoxal 5'-phosphate is required as a cofactor.

It catalyses the reaction (1S,2R)-1-C-(indol-3-yl)glycerol 3-phosphate + L-serine = D-glyceraldehyde 3-phosphate + L-tryptophan + H2O. It functions in the pathway amino-acid biosynthesis; L-tryptophan biosynthesis; L-tryptophan from chorismate: step 5/5. In terms of biological role, the beta subunit is responsible for the synthesis of L-tryptophan from indole and L-serine. The sequence is that of Tryptophan synthase beta chain from Shewanella sp. (strain MR-7).